The following is a 505-amino-acid chain: Protein ERGIC-53-like (505 aa).

A signal peptide spans 1 to 25 (MLEIRGLSPSLCLLSLLLVLHGAER). The Lumenal portion of the chain corresponds to 26–438 (SQPPPRRRFE…SGWLLGSSTC (413 aa)). The region spanning 32 to 254 (RRFEYKLSFK…DVLSFLTFSL (223 aa)) is the L-type lectin-like domain. Asparagine 84 carries an N-linked (GlcNAc...) asparagine glycan. An intrachain disulfide couples cysteine 177 to cysteine 216. A helical transmembrane segment spans residues 439 to 459 (LHTSIFLFFLLLQTVGFFCYV). The Cytoplasmic portion of the chain corresponds to 460-505 (NFSRQELDKRLQEYLSTGSLSLEPALPITRTIGVLRRQPISPSMQA).

It is found in the endoplasmic reticulum-Golgi intermediate compartment membrane. The sequence is that of Protein ERGIC-53-like (Lman1l) from Mus musculus (Mouse).